A 104-amino-acid chain; its full sequence is Large ribosomal subunit protein uL24 (104 aa).

It belongs to the universal ribosomal protein uL24 family. Part of the 50S ribosomal subunit.

In terms of biological role, one of two assembly initiator proteins, it binds directly to the 5'-end of the 23S rRNA, where it nucleates assembly of the 50S subunit. Functionally, one of the proteins that surrounds the polypeptide exit tunnel on the outside of the subunit. This Baumannia cicadellinicola subsp. Homalodisca coagulata protein is Large ribosomal subunit protein uL24.